A 212-amino-acid chain; its full sequence is HTH-type transcriptional regulator RutR (212 aa).

Residues 17–77 (SAKKKAILSA…AVLRQILDIW (61 aa)) enclose the HTH tetR-type domain. Positions 39 to 58 (TRLEQIAELAGVSKTNLLYY) form a DNA-binding region, H-T-H motif.

As to quaternary structure, homodimer.

Functionally, master transcription regulator which represses the degradation of pyrimidines (rutABCDEFG) and purines (gcl operon) for maintenance of metabolic balance between pyrimidines and purines. It also regulates the synthesis of pyrimidine nucleotides and arginine from glutamine (carAB) and the supply of glutamate (gadABWX). This chain is HTH-type transcriptional regulator RutR (rutR), found in Escherichia coli O6:H1 (strain CFT073 / ATCC 700928 / UPEC).